Reading from the N-terminus, the 128-residue chain is Glycoprotein hormone alpha-2 (128 aa).

Residues 1–20 (MPMAPRVLLLCLLGLAVTEG) form the signal peptide. Cystine bridges form between Cys-30-Cys-88, Cys-47-Cys-102, Cys-56-Cys-118, and Cys-60-Cys-120. Asn-36 and Asn-80 each carry an N-linked (GlcNAc...) asparagine glycan.

It belongs to the glycoprotein hormones subunit alpha family. In terms of assembly, heterodimer with GPHB5; this heterodimer interacts with thyroid-stimulating hormone receptor (TSHR), and hence stimulates cAMP production.

The protein localises to the secreted. Functions as a heterodimeric glycoprotein hormone with GPHB5 able to bind and activate the thyroid-stimulating hormone receptor (TSHR), leading to increased cAMP production. Plays a central role in controlling thyroid cell metabolism. This Mus musculus (Mouse) protein is Glycoprotein hormone alpha-2 (Gpha2).